The chain runs to 198 residues: tRNA (pseudouridine(54)-N(1))-methyltransferase (198 aa).

S-adenosyl-L-methionine is bound by residues L130, G153, 176–181 (LSPLEL), and C186.

This sequence belongs to the methyltransferase superfamily. TrmY family. Homodimer.

The protein localises to the cytoplasm. It carries out the reaction pseudouridine(54) in tRNA + S-adenosyl-L-methionine = N(1)-methylpseudouridine(54) in tRNA + S-adenosyl-L-homocysteine + H(+). In terms of biological role, specifically catalyzes the N1-methylation of pseudouridine at position 54 (Psi54) in tRNAs. The chain is tRNA (pseudouridine(54)-N(1))-methyltransferase from Methanococcus vannielii (strain ATCC 35089 / DSM 1224 / JCM 13029 / OCM 148 / SB).